Consider the following 417-residue polypeptide: Putative F-box protein At4g21240 (417 aa).

The segment covering 1–12 (MDRREEEEEETG) has biased composition (acidic residues). The interval 1–25 (MDRREEEEEETGYGEKGTRNQSKED) is disordered. Residues 16 to 25 (KGTRNQSKED) are compositionally biased toward basic and acidic residues. The region spanning 30–76 (GKIFELIPLDMIPDILLRLPAKSAVRFRIVSKLWLSITTRPYFIRSF) is the F-box domain.

The chain is Putative F-box protein At4g21240 from Arabidopsis thaliana (Mouse-ear cress).